Here is a 559-residue protein sequence, read N- to C-terminus: Transcription factor tstO (559 aa).

A DNA-binding region (zn(2)-C6 fungal-type) is located at residues 23 to 50; sequence CDACQSAKVRCGREKPTCRRCQNQGKTC. 2 disordered regions span residues 166–316 and 453–477; these read GPST…TGFS and ASPPPSIFDNNNTSTTTTTSSISTA. The span at 222–232 shows a compositional bias: low complexity; it reads SSESLSLEPSS. Polar residues predominate over residues 255-267; that stretch reads TRGSQKISPNPHS. The span at 268–279 shows a compositional bias: basic and acidic residues; that stretch reads IDSRTSSRDKSF. Low complexity-rich tracts occupy residues 286–316 and 462–477; these read STLGSRTPNTTTTSSSASSVGLTGSSTTGFS and NNNTSTTTTTSSISTA.

It is found in the nucleus. Its function is as follows. Transcription factore; part of the gene cluster that mediates the biosynthesis of the antihypercholesterolemic agents phomoidrides which are dimeric anhydrides. Probably regulates the expression of the genes from the cluster. This Talaromyces stipitatus (strain ATCC 10500 / CBS 375.48 / QM 6759 / NRRL 1006) (Penicillium stipitatum) protein is Transcription factor tstO.